We begin with the raw amino-acid sequence, 379 residues long: Queuine tRNA-ribosyltransferase (379 aa).

Aspartate 89 functions as the Proton acceptor in the catalytic mechanism. Residues aspartate 89–phenylalanine 93, aspartate 143, glutamine 187, and glycine 214 contribute to the substrate site. Positions glycine 245–aspartate 251 are RNA binding. The Nucleophile role is filled by aspartate 264. Positions threonine 269–arginine 273 are RNA binding; important for wobble base 34 recognition. 4 residues coordinate Zn(2+): cysteine 302, cysteine 304, cysteine 307, and histidine 333.

This sequence belongs to the queuine tRNA-ribosyltransferase family. Homodimer. Within each dimer, one monomer is responsible for RNA recognition and catalysis, while the other monomer binds to the replacement base PreQ1. Zn(2+) is required as a cofactor.

It catalyses the reaction 7-aminomethyl-7-carbaguanine + guanosine(34) in tRNA = 7-aminomethyl-7-carbaguanosine(34) in tRNA + guanine. It functions in the pathway tRNA modification; tRNA-queuosine biosynthesis. Catalyzes the base-exchange of a guanine (G) residue with the queuine precursor 7-aminomethyl-7-deazaguanine (PreQ1) at position 34 (anticodon wobble position) in tRNAs with GU(N) anticodons (tRNA-Asp, -Asn, -His and -Tyr). Catalysis occurs through a double-displacement mechanism. The nucleophile active site attacks the C1' of nucleotide 34 to detach the guanine base from the RNA, forming a covalent enzyme-RNA intermediate. The proton acceptor active site deprotonates the incoming PreQ1, allowing a nucleophilic attack on the C1' of the ribose to form the product. After dissociation, two additional enzymatic reactions on the tRNA convert PreQ1 to queuine (Q), resulting in the hypermodified nucleoside queuosine (7-(((4,5-cis-dihydroxy-2-cyclopenten-1-yl)amino)methyl)-7-deazaguanosine). This chain is Queuine tRNA-ribosyltransferase, found in Edwardsiella ictaluri (strain 93-146).